Reading from the N-terminus, the 141-residue chain is Large ribosomal subunit protein uL16c (141 aa).

A compositionally biased stretch (basic residues) spans 1–17; sequence MLSPRRTKYRKQHRGRL. The segment at 1–20 is disordered; that stretch reads MLSPRRTKYRKQHRGRLKGT.

The protein belongs to the universal ribosomal protein uL16 family. Part of the 50S ribosomal subunit.

Its subcellular location is the plastid. It is found in the chloroplast. The protein is Large ribosomal subunit protein uL16c of Staurastrum punctulatum (Green alga).